Consider the following 334-residue polypeptide: Phosphate acyltransferase (334 aa).

Belongs to the PlsX family. Homodimer. Probably interacts with PlsY.

It is found in the cytoplasm. It catalyses the reaction a fatty acyl-[ACP] + phosphate = an acyl phosphate + holo-[ACP]. The protein operates within lipid metabolism; phospholipid metabolism. Catalyzes the reversible formation of acyl-phosphate (acyl-PO(4)) from acyl-[acyl-carrier-protein] (acyl-ACP). This enzyme utilizes acyl-ACP as fatty acyl donor, but not acyl-CoA. In Mycoplasmopsis agalactiae (strain NCTC 10123 / CIP 59.7 / PG2) (Mycoplasma agalactiae), this protein is Phosphate acyltransferase.